Here is a 282-residue protein sequence, read N- to C-terminus: D-alanine aminotransferase (282 aa).

Substrate is bound at residue Tyr32. Arg51 serves as a coordination point for pyridoxal 5'-phosphate. 2 residues coordinate substrate: Arg99 and His101. The active-site Proton acceptor is Lys146. Lys146 is subject to N6-(pyridoxal phosphate)lysine. Glu178 is a pyridoxal 5'-phosphate binding site.

The protein belongs to the class-IV pyridoxal-phosphate-dependent aminotransferase family. Homodimer. Pyridoxal 5'-phosphate is required as a cofactor.

The enzyme catalyses D-alanine + 2-oxoglutarate = D-glutamate + pyruvate. Acts on the D-isomers of alanine, leucine, aspartate, glutamate, aminobutyrate, norvaline and asparagine. The enzyme transfers an amino group from a substrate D-amino acid to the pyridoxal phosphate cofactor to form pyridoxamine and an alpha-keto acid in the first half-reaction. The second half-reaction is the reverse of the first, transferring the amino group from the pyridoxamine to a second alpha-keto acid to form the product D-amino acid via a ping-pong mechanism. This is an important process in the formation of D-alanine and D-glutamate, which are essential bacterial cell wall components. The polypeptide is D-alanine aminotransferase (dat) (Staphylococcus haemolyticus).